We begin with the raw amino-acid sequence, 203 residues long: Large ribosomal subunit protein bL25 (203 aa).

It belongs to the bacterial ribosomal protein bL25 family. CTC subfamily. Part of the 50S ribosomal subunit; part of the 5S rRNA/L5/L18/L25 subcomplex. Contacts the 5S rRNA. Binds to the 5S rRNA independently of L5 and L18.

In terms of biological role, this is one of the proteins that binds to the 5S RNA in the ribosome where it forms part of the central protuberance. This Rickettsia peacockii (strain Rustic) protein is Large ribosomal subunit protein bL25.